We begin with the raw amino-acid sequence, 599 residues long: Sulfite reductase [NADPH] flavoprotein alpha-component (599 aa).

The Flavodoxin-like domain occupies 64-202 (VTLISASQTG…AASEWRACVV (139 aa)). FMN contacts are provided by residues 70-75 (SQTGNA), 117-120 (STQG), and 153-162 (LGDTSYEFFC). The 215-residue stretch at 234–448 (DAPLTATLSV…IEHNDNFRLP (215 aa)) folds into the FAD-binding FR-type domain. Residues T322, A356, 386–389 (RLYS), 404–406 (TVG), Y410, and 419–422 (GGAS) contribute to the FAD site. NADP(+)-binding positions include 519 to 520 (SR), 525 to 529 (KIYVQ), and D561. Y599 contacts FAD.

It belongs to the NADPH-dependent sulphite reductase flavoprotein subunit CysJ family. The protein in the N-terminal section; belongs to the flavodoxin family. This sequence in the C-terminal section; belongs to the flavoprotein pyridine nucleotide cytochrome reductase family. Alpha(8)-beta(8). The alpha component is a flavoprotein, the beta component is a hemoprotein. FAD is required as a cofactor. FMN serves as cofactor.

The catalysed reaction is hydrogen sulfide + 3 NADP(+) + 3 H2O = sulfite + 3 NADPH + 4 H(+). It participates in sulfur metabolism; hydrogen sulfide biosynthesis; hydrogen sulfide from sulfite (NADPH route): step 1/1. Its function is as follows. Component of the sulfite reductase complex that catalyzes the 6-electron reduction of sulfite to sulfide. This is one of several activities required for the biosynthesis of L-cysteine from sulfate. The flavoprotein component catalyzes the electron flow from NADPH -&gt; FAD -&gt; FMN to the hemoprotein component. The protein is Sulfite reductase [NADPH] flavoprotein alpha-component of Salmonella typhi.